The chain runs to 146 residues: Snaclec coagulation factor X-activating enzyme light chain 1 (146 aa).

An N-terminal signal peptide occupies residues 1–23 (MGRFISVSFGCLVVFLSLSGTEA). A disulfide bond links Cys27 and Cys38. The C-type lectin domain maps to 34–145 (YEQHCYKGFN…CNFIAPVVCK (112 aa)). A glycan (N-linked (GlcNAc...) (complex) asparagine) is linked at Asn47. 2 disulfide bridges follow: Cys55-Cys144 and Cys121-Cys136.

This sequence belongs to the snaclec family. As to quaternary structure, heterotrimer; disulfide-linked. The heterotrimer consists of 1 heavy chain (a metalloproteinase) and 2 light chains: LC1 and LC2. Post-translationally, N-glycosylated; probably required for conformation. Removal of easily accessible sugars does not change its functional capacity, but removal of the core sugars with N-glycanase causes a virtually complete loss of enzyme activity, apparently as a result of major conformational changes in the molecule. Not O-glycosylated. As to expression, expressed by the venom gland.

Its subcellular location is the secreted. In terms of biological role, regulatory subunit of the blood coagulation factor X- and IX-activating enzyme. The enzyme activates coagulation factor X (F10) by cleaving the Arg-Ile bond and is also able to activate coagulation factor IX (F9) and protein S (PROS1) by specific cleavage of Arg-Ile and Arg-Val bonds. May serve as an exosite by which the enzyme recognizes and binds to the Gla domain of factor X (F10) and factor IX (F9) in a calcium-dependent manner. The protein is Snaclec coagulation factor X-activating enzyme light chain 1 (LC1) of Daboia siamensis (Eastern Russel's viper).